We begin with the raw amino-acid sequence, 46 residues long: Apamin (46 aa).

An N-terminal signal peptide occupies residues 1–27 (MISMLRCIYLFLSVILITSYFVTPVMP). Cystine bridges form between Cys28–Cys38 and Cys30–Cys42. An essential for toxin activity region spans residues 40 to 41 (RR). Histidine amide is present on His45.

Expressed by the venom gland.

It is found in the secreted. Toxin with unique selectivity to KCa2 channels. Potently blocks human, rat and mouse KCa2.2/KCNN2/SK2 channels (IC(50)=27-140 pM), and moderately blocks human and rat KCa2.3/KCNN3/SK3 channels (IC(50)=0.6-4 nM), and human (IC(50)=0.7-12 nM) and mouse (IC(50)=28 nM) KCa2.1/KCNN1/SK1 channels. Does not show any antimicrobial activity. In vivo, intracerebroventricular injection into rats of a dose of 1 ng results in neurodegeneration specifically in the Purkinje cells of the cerebellum, and induces seizures characterized by hypersensitivity to noise, loss of postural control, paroxystic jerking, and alternating periods of great agitation with tonic-clonic convulsions and periods of total prostration. When administered at high doses, exerts anti-inflammatory, anti-oxidative, anti-fibrotic and anti-apoptotic properties in several models of inflammatory disease, including gouty arthritis, atherosclerosis, atopic dermatitis and acute kidney injury. Down-regulates pro-inflammatory signaling pathways, such as the NF-kappaB and STAT3 pathways, probably by blocking SK channels such as KCa2.2/KCNN2/SK2 and/or KCa2.3/KCNN3/SK3 which are thought to be involved in promoting some inflammatory responses. For example in mouse and rat microglia cells, inhibits LPS-activated KCa2.2/KCNN2/SK2 channels and TLR4 expression leading to the down-regulation of the NF-kappaB, STAT, and MAPK/ERK signaling pathways and, as a consequence, decreases secretion of pro-inflammatory cytokines. This is Apamin from Apis mellifera (Honeybee).